Here is a 1126-residue protein sequence, read N- to C-terminus: Formin-B (1126 aa).

The interval 1–21 is disordered; that stretch reads MFFKGKKKDKEKEKSHGNIGN. Positions 38–406 constitute a GBD/FH3 domain; the sequence is EQNLSNEDLK…LILKDPSKES (369 aa). Residues 427–447 are compositionally biased toward low complexity; sequence LNNSNNNNNNNNSNNNNNDSN. Residues 427 to 462 are disordered; it reads LNNSNNNNNNNNSNNNNNDSNVSTPNINTGSPLLPP. The span at 448–462 shows a compositional bias: polar residues; it reads VSTPNINTGSPLLPP. The stretch at 463-514 forms a coiled coil; sequence QQYQDLEQKLQLTQNEKNESQNKVKQLESEIKGLNSTLTGLQLKVTKLEADL. Positions 518–532 are enriched in polar residues; sequence SVTTPPSDTNGTTSP. 2 disordered regions span residues 518 to 619 and 1004 to 1078; these read SVTT…SVPS and ARKK…QNGT. The region spanning 527 to 611 is the FH1 domain; it reads NGTTSPPIEA…PGAPAVPNLP (85 aa). Over residues 543 to 597 the composition is skewed to pro residues; the sequence is GAPPPPPPPPPAPPVSGGGPPPPPPPPPPSSGGGPPPPPPPPSSGGPPPPPPPPG. Low complexity-rich tracts occupy residues 598–607, 1009–1022, and 1032–1064; these read GMKKPGAPAV, AASGPSVPSASGSS, and SPITPTSKSSISISQKPPQSTQPSISVQQQQQQ. Positions 612–1011 constitute an FH2 domain; that stretch reads PKKSSVPSVK…LAARKKAAAS (400 aa). A coiled-coil region spans residues 980–1010; the sequence is KFKNEFKRTIESIQKERENVQKLAARKKAAA. Positions 1071–1100 constitute a DAD domain; the sequence is DDIPQNGTFMDQLMSKMKGGEAIRASRRAS.

Belongs to the formin homology family. Diaphanous subfamily. As to quaternary structure, interacts (via GBD/FH3 domain) with activated Rho-GTPases. Interacts with pfyA and pfyB.

Functionally, formins play an important role in the nucleation of actin and the formation of linear actin filaments. The chain is Formin-B (forB) from Dictyostelium discoideum (Social amoeba).